The primary structure comprises 473 residues: Cysteine--tRNA ligase (473 aa).

Cysteine 28 is a Zn(2+) binding site. A 'HIGH' region motif is present at residues methionine 30–histidine 40. The Zn(2+) site is built by cysteine 209, histidine 234, and glutamate 238. A 'KMSKS' region motif is present at residues lysine 282–serine 286. Lysine 285 is a binding site for ATP.

Belongs to the class-I aminoacyl-tRNA synthetase family. In terms of assembly, monomer. Requires Zn(2+) as cofactor.

It is found in the cytoplasm. The enzyme catalyses tRNA(Cys) + L-cysteine + ATP = L-cysteinyl-tRNA(Cys) + AMP + diphosphate. The protein is Cysteine--tRNA ligase of Neisseria meningitidis serogroup B (strain ATCC BAA-335 / MC58).